A 149-amino-acid chain; its full sequence is UPF0260 protein Pfl01_1392 (149 aa).

It belongs to the UPF0260 family.

The sequence is that of UPF0260 protein Pfl01_1392 from Pseudomonas fluorescens (strain Pf0-1).